The sequence spans 675 residues: DNA ligase 1 (675 aa).

Residues 34-38 (DFEYD), 83-84 (SL), and Glu114 contribute to the NAD(+) site. Lys116 (N6-AMP-lysine intermediate) is an active-site residue. Positions 137, 177, 295, and 319 each coordinate NAD(+). Zn(2+)-binding residues include Cys413, Cys416, Cys431, and Cys436. The BRCT domain occupies 596–675 (NSGSALAGKT…AEFLRLLSGG (80 aa)).

This sequence belongs to the NAD-dependent DNA ligase family. LigA subfamily. Mg(2+) is required as a cofactor. Mn(2+) serves as cofactor.

The catalysed reaction is NAD(+) + (deoxyribonucleotide)n-3'-hydroxyl + 5'-phospho-(deoxyribonucleotide)m = (deoxyribonucleotide)n+m + AMP + beta-nicotinamide D-nucleotide.. Its function is as follows. DNA ligase that catalyzes the formation of phosphodiester linkages between 5'-phosphoryl and 3'-hydroxyl groups in double-stranded DNA using NAD as a coenzyme and as the energy source for the reaction. It is essential for DNA replication and repair of damaged DNA. This Opitutus terrae (strain DSM 11246 / JCM 15787 / PB90-1) protein is DNA ligase 1.